The sequence spans 74 residues: Cytochrome c oxidase subunit 3 (74 aa).

Helical transmembrane passes span 15–37 (SPWPLTGAIGAMTTVSGMVKWFH) and 42–59 (SLFLLGNIITILTVYQWW).

It belongs to the cytochrome c oxidase subunit 3 family. In terms of assembly, component of the cytochrome c oxidase (complex IV, CIV), a multisubunit enzyme composed of a catalytic core of 3 subunits and several supernumerary subunits. The complex exists as a monomer or a dimer and forms supercomplexes (SCs) in the inner mitochondrial membrane with ubiquinol-cytochrome c oxidoreductase (cytochrome b-c1 complex, complex III, CIII).

The protein localises to the mitochondrion inner membrane. The catalysed reaction is 4 Fe(II)-[cytochrome c] + O2 + 8 H(+)(in) = 4 Fe(III)-[cytochrome c] + 2 H2O + 4 H(+)(out). Its function is as follows. Component of the cytochrome c oxidase, the last enzyme in the mitochondrial electron transport chain which drives oxidative phosphorylation. The respiratory chain contains 3 multisubunit complexes succinate dehydrogenase (complex II, CII), ubiquinol-cytochrome c oxidoreductase (cytochrome b-c1 complex, complex III, CIII) and cytochrome c oxidase (complex IV, CIV), that cooperate to transfer electrons derived from NADH and succinate to molecular oxygen, creating an electrochemical gradient over the inner membrane that drives transmembrane transport and the ATP synthase. Cytochrome c oxidase is the component of the respiratory chain that catalyzes the reduction of oxygen to water. Electrons originating from reduced cytochrome c in the intermembrane space (IMS) are transferred via the dinuclear copper A center (CU(A)) of subunit 2 and heme A of subunit 1 to the active site in subunit 1, a binuclear center (BNC) formed by heme A3 and copper B (CU(B)). The BNC reduces molecular oxygen to 2 water molecules using 4 electrons from cytochrome c in the IMS and 4 protons from the mitochondrial matrix. This Drosophila simulans (Fruit fly) protein is Cytochrome c oxidase subunit 3 (mt:CoIII).